Reading from the N-terminus, the 539-residue chain is G protein-coupled receptor associated sorting protein 3 (539 aa).

Basic residues predominate over residues 1–10; it reads MTGSKNKARA. Disordered regions lie at residues 1-111 and 132-170; these read MTGS…DSWF and NSVA…EEEE. Basic and acidic residues-rich tracts occupy residues 66-80 and 88-106; these read VVAE…ESKA and FNHK…DKPS. A compositionally biased stretch (polar residues) spans 132–146; that stretch reads NSVAKCENKPSTSIQ.

It belongs to the GPRASP family. As to quaternary structure, homodimer.

Its subcellular location is the cytoplasm. The protein resides in the nucleus. In terms of biological role, survival and differentiation promoting protein that plays a role in the regulation of neurosynaptogenesis. Induces phosphatase PP2A activity which results in APP dephosphorylation and inhibits BACE1-mediated processing of APP. The sequence is that of G protein-coupled receptor associated sorting protein 3 (Gprasp3) from Rattus norvegicus (Rat).